Consider the following 308-residue polypeptide: MTFQDIILTLQNFWAKQNCLIVQPYDVEKGAGTLNPMTFLRSIGPEPWNVAYVEPSRRPADGRYGENPNRLYQHHQFQVIMKPSPDNIQELYLESLRELGIEPLEHDIRFVEDNWEHPGLGAWGLGWEVWLDGMEITQFTYFQQVGGLECKPVAVELTYGLERLASYIQEKENVFDLEWCNGYTYGDVFLQPEYEHSKYTFELSDVDMLFSLYNTYEAEAKRLMAERLVYPAYDYVLKCSHTFNLLDARGAISVTERTGYIARVRNLSREVAQTYYKERERLGFPLLQKGNADAADQVNQVKGEDTNE.

It belongs to the class-II aminoacyl-tRNA synthetase family. Tetramer of two alpha and two beta subunits.

Its subcellular location is the cytoplasm. The catalysed reaction is tRNA(Gly) + glycine + ATP = glycyl-tRNA(Gly) + AMP + diphosphate. This Brevibacillus brevis (strain 47 / JCM 6285 / NBRC 100599) protein is Glycine--tRNA ligase alpha subunit.